Consider the following 349-residue polypeptide: Protein RecA (349 aa).

64–71 serves as a coordination point for ATP; that stretch reads GPESSGKT. Residues 328-349 are disordered; it reads NGEIEVEAPSEEEFEDLPLDLK. The segment covering 331–349 has biased composition (acidic residues); it reads IEVEAPSEEEFEDLPLDLK.

Belongs to the RecA family.

It localises to the cytoplasm. In terms of biological role, can catalyze the hydrolysis of ATP in the presence of single-stranded DNA, the ATP-dependent uptake of single-stranded DNA by duplex DNA, and the ATP-dependent hybridization of homologous single-stranded DNAs. It interacts with LexA causing its activation and leading to its autocatalytic cleavage. This is Protein RecA from Halalkalibacterium halodurans (strain ATCC BAA-125 / DSM 18197 / FERM 7344 / JCM 9153 / C-125) (Bacillus halodurans).